The following is a 91-amino-acid chain: Small ribosomal subunit protein uS19 (91 aa).

The protein belongs to the universal ribosomal protein uS19 family.

Functionally, protein S19 forms a complex with S13 that binds strongly to the 16S ribosomal RNA. This Lactobacillus delbrueckii subsp. bulgaricus (strain ATCC 11842 / DSM 20081 / BCRC 10696 / JCM 1002 / NBRC 13953 / NCIMB 11778 / NCTC 12712 / WDCM 00102 / Lb 14) protein is Small ribosomal subunit protein uS19.